We begin with the raw amino-acid sequence, 186 residues long: Chromosome-anchoring protein RacA (186 aa).

Positions 3–23 form a DNA-binding region, H-T-H motif; sequence TADAANELGVSTKTVQRWVKQ. A coiled-coil region spans residues 90-170; it reads ERLEERLQRF…NRREKDTAVR (81 aa). Positions 158-186 are disordered; it reads ESMNRREKDTAVRREEKKPKSKLKSIFSF. The segment covering 160–175 has biased composition (basic and acidic residues); sequence MNRREKDTAVRREEKK.

The protein belongs to the RacA family.

It localises to the cytoplasm. Its function is as follows. Required for the formation of axial filaments and for anchoring the origin regions at the cell poles in sporulating cells, thus ensuring proper chromosome segregation in the prespore. Binds in a dispersed manner throughout the chromosome but preferentially to sites clustered in the origin portion of the chromosome, causing condensation of the chromosome and its remodeling into an elongated, anchored structure. The protein is Chromosome-anchoring protein RacA of Bacillus licheniformis (strain ATCC 14580 / DSM 13 / JCM 2505 / CCUG 7422 / NBRC 12200 / NCIMB 9375 / NCTC 10341 / NRRL NRS-1264 / Gibson 46).